The primary structure comprises 218 residues: Carnitine transport permease protein OpuCB (218 aa).

An ABC transmembrane type-1 domain is found at Thr19–Leu198. A run of 5 helical transmembrane segments spans residues Leu23–Leu43, Pro48–Ala68, Val79–Phe101, Val149–Phe169, and Leu179–Gly199.

The protein belongs to the binding-protein-dependent transport system permease family. The complex is composed of two ATP-binding proteins (OpuCA), two transmembrane proteins (OpuCB and OpuCD) and a solute-binding protein (OpuCC).

The protein resides in the cell membrane. Part of the ABC transporter complex OpuCABCD involved in carnitine uptake. Probably responsible for the translocation of the substrate across the membrane. Involved, with BetL and GbuABC, in osmoprotection and cryoprotection of Listeria. The polypeptide is Carnitine transport permease protein OpuCB (opuCB) (Listeria monocytogenes).